The sequence spans 198 residues: Proteasome subunit beta 1 (198 aa).

The propeptide at 1-8 (MSMYMPGA) is removed in mature form; by autocatalysis. Thr9 serves as the catalytic Nucleophile.

This sequence belongs to the peptidase T1B family. In terms of assembly, the 20S proteasome core is composed of 14 alpha and 14 beta subunits that assemble into four stacked heptameric rings, resulting in a barrel-shaped structure. The two inner rings, each composed of seven catalytic beta subunits, are sandwiched by two outer rings, each composed of seven alpha subunits. The catalytic chamber with the active sites is on the inside of the barrel. Has a gated structure, the ends of the cylinder being occluded by the N-termini of the alpha-subunits. Is capped at one or both ends by the proteasome regulatory ATPase, PAN.

The protein resides in the cytoplasm. It carries out the reaction Cleavage of peptide bonds with very broad specificity.. The formation of the proteasomal ATPase PAN-20S proteasome complex, via the docking of the C-termini of PAN into the intersubunit pockets in the alpha-rings, triggers opening of the gate for substrate entry. Interconversion between the open-gate and close-gate conformations leads to a dynamic regulation of the 20S proteasome proteolysis activity. In terms of biological role, component of the proteasome core, a large protease complex with broad specificity involved in protein degradation. This Nitrosopumilus maritimus (strain SCM1) protein is Proteasome subunit beta 1.